Consider the following 366-residue polypeptide: tRNA/tmRNA (uracil-C(5))-methyltransferase (366 aa).

5 residues coordinate S-adenosyl-L-methionine: Q190, Y218, N223, E239, and D299. Catalysis depends on C324, which acts as the Nucleophile. Catalysis depends on E358, which acts as the Proton acceptor.

Belongs to the class I-like SAM-binding methyltransferase superfamily. RNA M5U methyltransferase family. TrmA subfamily.

The enzyme catalyses uridine(54) in tRNA + S-adenosyl-L-methionine = 5-methyluridine(54) in tRNA + S-adenosyl-L-homocysteine + H(+). It carries out the reaction uridine(341) in tmRNA + S-adenosyl-L-methionine = 5-methyluridine(341) in tmRNA + S-adenosyl-L-homocysteine + H(+). In terms of biological role, dual-specificity methyltransferase that catalyzes the formation of 5-methyluridine at position 54 (m5U54) in all tRNAs, and that of position 341 (m5U341) in tmRNA (transfer-mRNA). The protein is tRNA/tmRNA (uracil-C(5))-methyltransferase of Salmonella paratyphi A (strain ATCC 9150 / SARB42).